A 442-amino-acid chain; its full sequence is Serine--tRNA ligase (442 aa).

244–246 serves as a coordination point for L-serine; it reads TAE. 275 to 277 lines the ATP pocket; the sequence is RAE. Residue Glu-298 coordinates L-serine. 365–368 contributes to the ATP binding site; sequence EISS. Ser-400 is a binding site for L-serine.

The protein belongs to the class-II aminoacyl-tRNA synthetase family. Type-1 seryl-tRNA synthetase subfamily. In terms of assembly, homodimer. The tRNA molecule binds across the dimer.

It localises to the cytoplasm. It catalyses the reaction tRNA(Ser) + L-serine + ATP = L-seryl-tRNA(Ser) + AMP + diphosphate + H(+). The catalysed reaction is tRNA(Sec) + L-serine + ATP = L-seryl-tRNA(Sec) + AMP + diphosphate + H(+). It functions in the pathway aminoacyl-tRNA biosynthesis; selenocysteinyl-tRNA(Sec) biosynthesis; L-seryl-tRNA(Sec) from L-serine and tRNA(Sec): step 1/1. In terms of biological role, catalyzes the attachment of serine to tRNA(Ser). Is also able to aminoacylate tRNA(Sec) with serine, to form the misacylated tRNA L-seryl-tRNA(Sec), which will be further converted into selenocysteinyl-tRNA(Sec). This chain is Serine--tRNA ligase, found in Bradyrhizobium sp. (strain ORS 278).